The primary structure comprises 625 residues: Chaperone protein HtpG (625 aa).

Residues 1–332 (MSKKTNAPVQ…TEDLSLNVSR (332 aa)) are a; substrate-binding. The interval 333-545 (EVVQSSPVMA…KDAMDSQMER (213 aa)) is b. The c stretch occupies residues 546–625 (MMKMMQQEMP…ELIEAATLSR (80 aa)).

Belongs to the heat shock protein 90 family. In terms of assembly, homodimer.

The protein localises to the cytoplasm. In terms of biological role, molecular chaperone. Has ATPase activity. The polypeptide is Chaperone protein HtpG (Chlorobium phaeovibrioides (strain DSM 265 / 1930) (Prosthecochloris vibrioformis (strain DSM 265))).